The primary structure comprises 114 residues: Notch-regulated ankyrin repeat-containing protein (114 aa).

ANK repeat units lie at residues 50–79 (EGQTALHQSVIDGNLELVKLLVKFGADIRL) and 83–112 (DGWSALHIAAFGGHQDIVLYLITKAKYAAS).

It belongs to the NRARP family. Interacts with LEF1.

Functionally, downstream effector of Notch signaling. Involved in the regulation of liver cancer cells self-renewal. Involved in angiogenesis acting downstream of Notch at branch points to regulate vascular density. Proposed to integrate endothelial Notch and Wnt signaling to control stalk cell proliferation and to stablilize new endothelial connections during angiogenesis. During somitogenesis involved in maintenance of proper somite segmentation and proper numbers of somites and vertebrae. Required for proper anterior-posterior somite patterning. Proposed to function in a negative feedback loop to destabilize Notch 1 intracellular domain (NICD) and down-regulate the Notch signal, preventing expansion of the Notch signal into the anterior somite domain. The protein is Notch-regulated ankyrin repeat-containing protein (NRARP) of Homo sapiens (Human).